A 219-amino-acid polypeptide reads, in one-letter code: Ribose-5-phosphate isomerase A (219 aa).

Residues 28–31, 81–84, and 94–97 each bind substrate; these read TGST, DGAD, and KGGG. The active-site Proton acceptor is the Glu-103. Lys-121 contributes to the substrate binding site.

Belongs to the ribose 5-phosphate isomerase family. As to quaternary structure, homodimer.

The enzyme catalyses aldehydo-D-ribose 5-phosphate = D-ribulose 5-phosphate. The protein operates within carbohydrate degradation; pentose phosphate pathway; D-ribose 5-phosphate from D-ribulose 5-phosphate (non-oxidative stage): step 1/1. Catalyzes the reversible conversion of ribose-5-phosphate to ribulose 5-phosphate. This chain is Ribose-5-phosphate isomerase A, found in Shewanella loihica (strain ATCC BAA-1088 / PV-4).